Consider the following 175-residue polypeptide: Methylated-DNA--protein-cysteine methyltransferase (175 aa).

Cys-142 (nucleophile; methyl group acceptor) is an active-site residue.

It belongs to the MGMT family.

The protein resides in the cytoplasm. The enzyme catalyses a 6-O-methyl-2'-deoxyguanosine in DNA + L-cysteinyl-[protein] = S-methyl-L-cysteinyl-[protein] + a 2'-deoxyguanosine in DNA. It catalyses the reaction a 4-O-methyl-thymidine in DNA + L-cysteinyl-[protein] = a thymidine in DNA + S-methyl-L-cysteinyl-[protein]. Involved in the cellular defense against the biological effects of O6-methylguanine (O6-MeG) and O4-methylthymine (O4-MeT) in DNA. Repairs the methylated nucleobase in DNA by stoichiometrically transferring the methyl group to a cysteine residue in the enzyme. This is a suicide reaction: the enzyme is irreversibly inactivated. The chain is Methylated-DNA--protein-cysteine methyltransferase from Thermococcus barophilus (strain DSM 11836 / MP).